Here is a 35-residue protein sequence, read N- to C-terminus: Water stress-responsive protein 7 (35 aa).

The chain is Water stress-responsive protein 7 from Pinus pinaster (Maritime pine).